We begin with the raw amino-acid sequence, 66 residues long: Large ribosomal subunit protein bL35 (66 aa).

Belongs to the bacterial ribosomal protein bL35 family.

The chain is Large ribosomal subunit protein bL35 from Afipia carboxidovorans (strain ATCC 49405 / DSM 1227 / KCTC 32145 / OM5) (Oligotropha carboxidovorans).